Consider the following 403-residue polypeptide: Arginine biosynthesis bifunctional protein ArgJ (403 aa).

Over residues methionine 1–histidine 11 the composition is skewed to polar residues. Residues methionine 1 to alanine 21 form a disordered region. Threonine 161, lysine 183, threonine 194, glutamate 273, asparagine 398, and threonine 403 together coordinate substrate. The active-site Nucleophile is the threonine 194.

Belongs to the ArgJ family. As to quaternary structure, heterotetramer of two alpha and two beta chains.

Its subcellular location is the cytoplasm. It carries out the reaction N(2)-acetyl-L-ornithine + L-glutamate = N-acetyl-L-glutamate + L-ornithine. It catalyses the reaction L-glutamate + acetyl-CoA = N-acetyl-L-glutamate + CoA + H(+). The protein operates within amino-acid biosynthesis; L-arginine biosynthesis; L-ornithine and N-acetyl-L-glutamate from L-glutamate and N(2)-acetyl-L-ornithine (cyclic): step 1/1. Its pathway is amino-acid biosynthesis; L-arginine biosynthesis; N(2)-acetyl-L-ornithine from L-glutamate: step 1/4. In terms of biological role, catalyzes two activities which are involved in the cyclic version of arginine biosynthesis: the synthesis of N-acetylglutamate from glutamate and acetyl-CoA as the acetyl donor, and of ornithine by transacetylation between N(2)-acetylornithine and glutamate. This chain is Arginine biosynthesis bifunctional protein ArgJ, found in Rhodococcoides fascians (Rhodococcus fascians).